Here is a 130-residue protein sequence, read N- to C-terminus: Small ribosomal subunit protein uS8 (130 aa).

The protein belongs to the universal ribosomal protein uS8 family. In terms of assembly, part of the 30S ribosomal subunit.

One of the primary rRNA binding proteins, it binds directly to 16S rRNA central domain where it helps coordinate assembly of the platform of the 30S subunit. The protein is Small ribosomal subunit protein uS8 of Halobacterium salinarum (strain ATCC 29341 / DSM 671 / R1).